Reading from the N-terminus, the 87-residue chain is Phytosulfokines 2 (87 aa).

The signal sequence occupies residues 1-22 (MANVSALLTIALLLCSTLMCTA). The propeptide occupies 23 to 77 (RPEPAISISITTAADPCNMEKKIEGKLDDMHMVDENCGADDEDCLMRRTLVAHTD). 2 positions are modified to sulfotyrosine: tyrosine 78 and tyrosine 80. Positions 83–87 (KKKHP) are excised as a propeptide.

Belongs to the phytosulfokine family. Sulfation is important for activity and for the binding to a putative membrane receptor. Post-translationally, PSK-beta is an enzymatic derivative of PSK-alpha. As to expression, expressed in stems, roots and leaves.

It is found in the secreted. Functionally, promotes plant cell differentiation, organogenesis and somatic embryogenesis as well as cell proliferation. The polypeptide is Phytosulfokines 2 (PSK2) (Arabidopsis thaliana (Mouse-ear cress)).